The sequence spans 461 residues: Bifunctional protein GlmU (461 aa).

A pyrophosphorylase region spans residues 1–235 (MKAIILAAGL…ITEIFGVNDR (235 aa)). Residues 6-9 (LAAG), lysine 20, glutamine 71, and 77-78 (GT) each bind UDP-N-acetyl-alpha-D-glucosamine. A Mg(2+)-binding site is contributed by aspartate 102. Positions 145, 160, 175, and 233 each coordinate UDP-N-acetyl-alpha-D-glucosamine. Asparagine 233 provides a ligand contact to Mg(2+). Residues 236-256 (WELSFAESVIKMRILENLARS) form a linker region. An N-acetyltransferase region spans residues 257-461 (GVTIHSPESV…LEDKSKVKDE (205 aa)). 2 residues coordinate UDP-N-acetyl-alpha-D-glucosamine: arginine 339 and lysine 357. Histidine 369 (proton acceptor) is an active-site residue. UDP-N-acetyl-alpha-D-glucosamine is bound by residues tyrosine 372 and asparagine 383. Acetyl-CoA is bound by residues alanine 386, serine 411, glycine 429, and arginine 446.

In the N-terminal section; belongs to the N-acetylglucosamine-1-phosphate uridyltransferase family. It in the C-terminal section; belongs to the transferase hexapeptide repeat family. In terms of assembly, homotrimer. Requires Mg(2+) as cofactor.

The protein resides in the cytoplasm. The enzyme catalyses alpha-D-glucosamine 1-phosphate + acetyl-CoA = N-acetyl-alpha-D-glucosamine 1-phosphate + CoA + H(+). It carries out the reaction N-acetyl-alpha-D-glucosamine 1-phosphate + UTP + H(+) = UDP-N-acetyl-alpha-D-glucosamine + diphosphate. The protein operates within nucleotide-sugar biosynthesis; UDP-N-acetyl-alpha-D-glucosamine biosynthesis; N-acetyl-alpha-D-glucosamine 1-phosphate from alpha-D-glucosamine 6-phosphate (route II): step 2/2. Its pathway is nucleotide-sugar biosynthesis; UDP-N-acetyl-alpha-D-glucosamine biosynthesis; UDP-N-acetyl-alpha-D-glucosamine from N-acetyl-alpha-D-glucosamine 1-phosphate: step 1/1. It participates in bacterial outer membrane biogenesis; LPS lipid A biosynthesis. Its function is as follows. Catalyzes the last two sequential reactions in the de novo biosynthetic pathway for UDP-N-acetylglucosamine (UDP-GlcNAc). The C-terminal domain catalyzes the transfer of acetyl group from acetyl coenzyme A to glucosamine-1-phosphate (GlcN-1-P) to produce N-acetylglucosamine-1-phosphate (GlcNAc-1-P), which is converted into UDP-GlcNAc by the transfer of uridine 5-monophosphate (from uridine 5-triphosphate), a reaction catalyzed by the N-terminal domain. This chain is Bifunctional protein GlmU, found in Hydrogenobaculum sp. (strain Y04AAS1).